The chain runs to 430 residues: tRNA(Ile)-lysidine synthase (430 aa).

ATP is bound at residue 21–26; the sequence is SGGLDS.

Belongs to the tRNA(Ile)-lysidine synthase family.

It is found in the cytoplasm. The enzyme catalyses cytidine(34) in tRNA(Ile2) + L-lysine + ATP = lysidine(34) in tRNA(Ile2) + AMP + diphosphate + H(+). Functionally, ligates lysine onto the cytidine present at position 34 of the AUA codon-specific tRNA(Ile) that contains the anticodon CAU, in an ATP-dependent manner. Cytidine is converted to lysidine, thus changing the amino acid specificity of the tRNA from methionine to isoleucine. The chain is tRNA(Ile)-lysidine synthase from Salmonella dublin (strain CT_02021853).